The chain runs to 170 residues: Probable phospholipid hydroperoxide glutathione peroxidase (170 aa).

The active site involves C44.

It belongs to the glutathione peroxidase family.

The protein resides in the cytoplasm. It catalyses the reaction a hydroperoxy polyunsaturated fatty acid + 2 glutathione = a hydroxy polyunsaturated fatty acid + glutathione disulfide + H2O. Functionally, protects cells and enzymes from oxidative damage, by catalyzing the reduction of hydrogen peroxide, lipid peroxides and organic hydroperoxide, by glutathione. The chain is Probable phospholipid hydroperoxide glutathione peroxidase (GPXMC1) from Mesembryanthemum crystallinum (Common ice plant).